Here is a 309-residue protein sequence, read N- to C-terminus: tRNA pseudouridine synthase B (309 aa).

Asp-39 serves as the catalytic Nucleophile.

It belongs to the pseudouridine synthase TruB family. Type 1 subfamily.

The enzyme catalyses uridine(55) in tRNA = pseudouridine(55) in tRNA. Its function is as follows. Responsible for synthesis of pseudouridine from uracil-55 in the psi GC loop of transfer RNAs. This chain is tRNA pseudouridine synthase B, found in Bacillus velezensis (strain DSM 23117 / BGSC 10A6 / LMG 26770 / FZB42) (Bacillus amyloliquefaciens subsp. plantarum).